A 335-amino-acid polypeptide reads, in one-letter code: Dihydroorotate dehydrogenase (quinone) (335 aa).

FMN is bound by residues 58 to 62 and Thr-82; that span reads AGADK. Lys-62 is a substrate binding site. 107–111 contacts substrate; sequence NRNGF. Residues Asn-135 and Asn-168 each coordinate FMN. Residue Asn-168 participates in substrate binding. Ser-171 serves as the catalytic Nucleophile. Asn-173 contacts substrate. 2 residues coordinate FMN: Lys-213 and Gly-241. 242–243 lines the substrate pocket; that stretch reads NT. FMN contacts are provided by residues Gly-264, Gly-293, and 314-315; that span reads YS.

This sequence belongs to the dihydroorotate dehydrogenase family. Type 2 subfamily. As to quaternary structure, monomer. FMN serves as cofactor.

Its subcellular location is the cell membrane. It catalyses the reaction (S)-dihydroorotate + a quinone = orotate + a quinol. It participates in pyrimidine metabolism; UMP biosynthesis via de novo pathway; orotate from (S)-dihydroorotate (quinone route): step 1/1. Catalyzes the conversion of dihydroorotate to orotate with quinone as electron acceptor. This is Dihydroorotate dehydrogenase (quinone) from Actinobacillus pleuropneumoniae serotype 3 (strain JL03).